Reading from the N-terminus, the 139-residue chain is Small ribosomal subunit protein uS11 (139 aa).

The disordered stretch occupies residues 117 to 139 (VEDVTPIPHDGTRPKGGRRGRRV).

The protein belongs to the universal ribosomal protein uS11 family. Part of the 30S ribosomal subunit.

Located on the platform of the 30S subunit. In Thermococcus onnurineus (strain NA1), this protein is Small ribosomal subunit protein uS11.